The chain runs to 1759 residues: Putative ATP-dependent RNA helicase TDRD12 (1759 aa).

A Tudor 1 domain is found at 74-153 (FQNLEQVWFS…KLSNTETRAV (80 aa)). Low complexity predominate over residues 480-495 (NSAASESSTKSSMDSS). The disordered stretch occupies residues 480–506 (NSAASESSTKSSMDSSRISDEDDLSSD). Residues 611-789 (WGTILRGLST…DFLEPIVLKA (179 aa)) enclose the Helicase ATP-binding domain. 624–631 (SPPRSGKT) contacts ATP. A Helicase C-terminal domain is found at 823-980 (NVLQFIDSVQ…NVPKILDEVS (158 aa)). A Tudor 2 domain is found at 1335–1394 (GSNVGDIVLAKFPDDSMYERARIDHIYSEDKVKCFFVDQGDWRDVSTNDLATITENFITQ). The CS domain occupies 1618 to 1704 (LSKPKICWSQ…LMCRNWLALT (87 aa)).

In terms of assembly, interacts (via Tudor domain 2) with Siwi. Component of the PET complex, at least composed of EXD1, SIWI, TDRD12 and piRNAs. As to expression, expressed in the yolk cells. Not detected in yolk granules.

It localises to the chromosome. The protein localises to the cytoplasm. It is found in the cytosol. Its subcellular location is the nucleus membrane. It carries out the reaction ATP + H2O = ADP + phosphate + H(+). In terms of biological role, probable ATP-binding RNA helicase required during spermatogenesis to repress transposable elements and preventing their mobilization, which is essential for the germline integrity. Acts via the piRNA metabolic process, which mediates the repression of transposable elements during meiosis by forming complexes composed of piRNAs and Piwi proteins and governs the methylation and subsequent repression of transposons. The polypeptide is Putative ATP-dependent RNA helicase TDRD12 (TDRD12) (Bombyx mori (Silk moth)).